A 378-amino-acid polypeptide reads, in one-letter code: Tyrosinase-like protein phomQ1' (378 aa).

A helical membrane pass occupies residues threonine 42–serine 62. Cu cation is bound by residues histidine 130 and histidine 139. The N-linked (GlcNAc...) asparagine glycan is linked to asparagine 209. Cu cation contacts are provided by histidine 279 and histidine 305.

Belongs to the tyrosinase family. Requires Cu(2+) as cofactor.

It localises to the membrane. The protein operates within mycotoxin biosynthesis. In terms of biological role, tyrosinase-like protein; part of the gene cluster that mediates the biosynthesis of the phomopsins, a group of hexapeptide mycotoxins which infects lupins and causes lupinosis disease in livestock. The pathway starts with the processing of the precursor phomA' by several endopeptidases including kexin proteases as well as the cluster-specific S41 family peptidase phomP1 and the oligopeptidase phomG' to produce 10 identical copies of the hexapeptide Tyr-Val-Ile-Pro-Ile-Asp. After being excised from the precursor peptide, the core peptides are cyclized and modified post-translationally by enzymes encoded within the gene cluster. The timing and order of proteolysis of the phomA' precursor and PTMs are still unknown. Two tyrosinase-like enzymes, phomQ1' and phomQ2, catalyze the chlorination and hydroxylation of Tyr, respectively. PhomYb, is proposed to be involved in the construction of the macrocyclic structure. The other 4 ustYa family proteins may be involved in PTMs that generate the unique structure of phomopsin A. PhomYa' is required for the hydroxylation of C-beta of Tyr. PhomYc', phomYd', and phomYe are responsible for the biosynthesis of 2,3-dehydroisoleucine (dIle), 2,3-dehydroaspartic acid (dAsp), and 3,4-dehydroproline (dPro), respectively. While dIle formation by phomYc' is indispensable for the installation of dAsp by phomYd', the order of the other PTMs have not been elucidated yet. Most of the biosynthetic enzymes likely have broad substrate specificity, and thus, there might be a metabolic grid from a precursor to phomopsin A. The enzyme(s) responsible for the biosynthesis of 3,4-dehydrovaline (dVal) have also not been identified yet. Finally, phomM' acts as an S-adenosylmethionine-dependent alpha-N-methyltransferase that catalyzes two successive N-methylation reactions, converting N-desmethyl-phomopsin A to phomopsin A and phomopsin A further to an N,N-dimethylated congener called phomopsin E. This chain is Tyrosinase-like protein phomQ1', found in Diaporthe leptostromiformis (Lupinosis disease fungus).